The sequence spans 676 residues: Probable LRR receptor-like serine/threonine-protein kinase At4g31250 (676 aa).

The signal sequence occupies residues 1 to 26 (MTRDDKFPIVYSLLLIVLLFVSPIYG). The Extracellular portion of the chain corresponds to 27–242 (DGDADALLKF…LLPCRYTRPP (216 aa)). Residues Asn42, Asn73, and Asn83 are each glycosylated (N-linked (GlcNAc...) asparagine). LRR repeat units lie at residues 98–122 (IRGL…IDGL), 123–146 (VSLA…LFSG), 148–171 (KALL…LGKL), 172–195 (PKLT…KQKN), and 197–218 (VTVN…GLMN). Asn218 carries an N-linked (GlcNAc...) asparagine glycan. Residues 243–263 (FFTVFLLALTILAVVVLITVF) traverse the membrane as a helical segment. Over 264-676 (LSVCILSRRQ…RAMTEEFSLM (413 aa)) the chain is Cytoplasmic. Residues 319–330 (TVQRDSTATSGA) show a composition bias toward polar residues. The disordered stretch occupies residues 319 to 347 (TVQRDSTATSGAISVGGLSPDEDKRGDQR). Residues 366-640 (RASAEVLGSG…HEAVDRIEEV (275 aa)) form the Protein kinase domain. Residue Ser368 is modified to Phosphoserine. Residues 372-380 (LGSGGFGSS) and Lys394 contribute to the ATP site. Phosphoserine occurs at positions 446 and 543. The tract at residues 641–676 (DRDAGGGQESVRSSYVTASDGDHRSSRAMTEEFSLM) is disordered.

Belongs to the protein kinase superfamily. Ser/Thr protein kinase family.

It localises to the membrane. It catalyses the reaction L-seryl-[protein] + ATP = O-phospho-L-seryl-[protein] + ADP + H(+). It carries out the reaction L-threonyl-[protein] + ATP = O-phospho-L-threonyl-[protein] + ADP + H(+). This is Probable LRR receptor-like serine/threonine-protein kinase At4g31250 from Arabidopsis thaliana (Mouse-ear cress).